We begin with the raw amino-acid sequence, 666 residues long: Asperfuranone cluster transcription factor afoA (666 aa).

The zn(2)-C6 fungal-type DNA-binding region spans 16–43; the sequence is CEECRRRKARCDRVRPKCGFCTENELQC. Disordered stretches follow at residues 184 to 206 and 347 to 373; these read LSFD…STTR and AGSD…GENA. Positions 353-369 are enriched in low complexity; that stretch reads LSPPSSSPPSSLTLSPS.

Its subcellular location is the nucleus. Transcription factor that regulates the expression of the gene cluster that mediates the biosynthesis of asperfuranone, a probable antitumor agent. The sequence is that of Asperfuranone cluster transcription factor afoA from Emericella nidulans (strain FGSC A4 / ATCC 38163 / CBS 112.46 / NRRL 194 / M139) (Aspergillus nidulans).